Consider the following 430-residue polypeptide: Asparagine--tRNA ligase (430 aa).

Belongs to the class-II aminoacyl-tRNA synthetase family. Homodimer.

Its subcellular location is the cytoplasm. The catalysed reaction is tRNA(Asn) + L-asparagine + ATP = L-asparaginyl-tRNA(Asn) + AMP + diphosphate + H(+). The sequence is that of Asparagine--tRNA ligase from Geobacillus thermodenitrificans (strain NG80-2).